A 91-amino-acid polypeptide reads, in one-letter code: Small ribosomal subunit protein uS19 (91 aa).

This sequence belongs to the universal ribosomal protein uS19 family.

Functionally, protein S19 forms a complex with S13 that binds strongly to the 16S ribosomal RNA. The chain is Small ribosomal subunit protein uS19 from Synechococcus sp. (strain CC9605).